Consider the following 202-residue polypeptide: ATP synthase subunit b (202 aa).

The chain crosses the membrane as a helical span at residues 9–29; it reads TTLSLCLAVCVVVIAVGTGWA.

Belongs to the ATPase B chain family. F-type ATPases have 2 components, F(1) - the catalytic core - and F(0) - the membrane proton channel. F(1) has five subunits: alpha(3), beta(3), gamma(1), delta(1), epsilon(1). F(0) has three main subunits: a(1), b(2) and c(10-14). The alpha and beta chains form an alternating ring which encloses part of the gamma chain. F(1) is attached to F(0) by a central stalk formed by the gamma and epsilon chains, while a peripheral stalk is formed by the delta and b chains.

It localises to the cell inner membrane. In terms of biological role, f(1)F(0) ATP synthase produces ATP from ADP in the presence of a proton or sodium gradient. F-type ATPases consist of two structural domains, F(1) containing the extramembraneous catalytic core and F(0) containing the membrane proton channel, linked together by a central stalk and a peripheral stalk. During catalysis, ATP synthesis in the catalytic domain of F(1) is coupled via a rotary mechanism of the central stalk subunits to proton translocation. Functionally, component of the F(0) channel, it forms part of the peripheral stalk, linking F(1) to F(0). This chain is ATP synthase subunit b, found in Pelobacter propionicus (strain DSM 2379 / NBRC 103807 / OttBd1).